The primary structure comprises 451 residues: Cytosolic Fe-S cluster assembly factor NAR1 (451 aa).

8 residues coordinate [4Fe-4S] cluster: cysteine 20, cysteine 56, cysteine 59, cysteine 62, cysteine 166, cysteine 213, cysteine 382, and cysteine 386.

Belongs to the NARF family.

Component of the cytosolic Fe/S protein assembly machinery. Required for maturation of extramitochondrial Fe/S proteins. May play a role in the transfer of pre-assembled Fe/S clusters to target apoproteins. In Eremothecium gossypii (strain ATCC 10895 / CBS 109.51 / FGSC 9923 / NRRL Y-1056) (Yeast), this protein is Cytosolic Fe-S cluster assembly factor NAR1 (NAR1).